A 334-amino-acid chain; its full sequence is tRNA-dihydrouridine(20/20a) synthase (334 aa).

Residues 18 to 20 and Q71 each bind FMN; that span reads PMM. C101 serves as the catalytic Proton donor. FMN-binding positions include K140, H172, 212-214, and 234-235; these read NGG and GR.

The protein belongs to the Dus family. DusA subfamily. The cofactor is FMN.

The catalysed reaction is 5,6-dihydrouridine(20) in tRNA + NADP(+) = uridine(20) in tRNA + NADPH + H(+). The enzyme catalyses 5,6-dihydrouridine(20) in tRNA + NAD(+) = uridine(20) in tRNA + NADH + H(+). It catalyses the reaction 5,6-dihydrouridine(20a) in tRNA + NADP(+) = uridine(20a) in tRNA + NADPH + H(+). It carries out the reaction 5,6-dihydrouridine(20a) in tRNA + NAD(+) = uridine(20a) in tRNA + NADH + H(+). Its function is as follows. Catalyzes the synthesis of 5,6-dihydrouridine (D), a modified base found in the D-loop of most tRNAs, via the reduction of the C5-C6 double bond in target uridines. Specifically modifies U20 and U20a in tRNAs. This chain is tRNA-dihydrouridine(20/20a) synthase, found in Xanthomonas axonopodis pv. citri (strain 306).